The sequence spans 652 residues: Drebrin (652 aa).

Alanine 2 is subject to N-acetylalanine. The ADF-H domain occupies 5-134; the sequence is GFAAHRLELL…DPGAIGQRLS (130 aa). Basic and acidic residues-rich tracts occupy residues 211–236 and 288–298; these read MEQE…EEHR and DNPREFFKQQE. 2 disordered regions span residues 211 to 350 and 371 to 652; these read MEQE…YITC and SAAG…GGGL. Residues 328–340 are compositionally biased toward low complexity; it reads SGPPSSSSSSSSP. Residues 507–517 show a composition bias toward pro residues; the sequence is PDTPAGPPVPP. Composition is skewed to acidic residues over residues 540-554 and 640-652; these read QHEE…EEAT and PLPE…GGGL.

In terms of tissue distribution, brain neurons.

The protein localises to the cytoplasm. It is found in the cell projection. It localises to the dendrite. Its subcellular location is the cell cortex. The protein resides in the cell junction. The protein localises to the growth cone. Functionally, actin cytoskeleton-organizing protein that plays a role in the formation of cell projections. Plays a role in dendritic spine morphogenesis and organization, including the localization of the dopamine receptor DRD1 to the dendritic spines. Involved in synaptic plasticity. This is Drebrin (DBN1) from Gallus gallus (Chicken).